We begin with the raw amino-acid sequence, 348 residues long: Capsid protein (348 aa).

Residues 58-84 (TPRRPRMTNSPPRTSRNSPGQAGKSMT) are disordered. Residues 64-84 (MTNSPPRTSRNSPGQAGKSMT) show a composition bias toward polar residues. Residues 82 to 239 (SMTMSKTELL…ELFIQYTIVL (158 aa)) are s domain, virion shell. The segment at 240 to 348 (SDPTKTAKIS…QPLKVVVYRM (109 aa)) is p domain, projecting.

Belongs to the icosahedral plant coat protein family. As to quaternary structure, homodimer. Homomultimer. It depends on Ca(2+) as a cofactor.

It is found in the virion. Functionally, capsid protein self-assembles to form an icosahedral capsid with a T=3 symmetry, about 32-35 nm in diameter, and consisting of 180 capsid proteins. Also acts as a suppressor of RNA-mediated gene silencing, also known as post-transcriptional gene silencing (PTGS), a mechanism of plant viral defense that limits the accumulation of viral RNAs. The chain is Capsid protein from Carnation mottle virus (isolate China/Shanghai) (CarMV).